Here is a 190-residue protein sequence, read N- to C-terminus: NADH dehydrogenase [ubiquinone] iron-sulfur protein 3 (190 aa).

It belongs to the complex I 30 kDa subunit family. Complex I is composed of about 45 different subunits. This is a component of the iron-sulfur (IP) fragment of the enzyme.

It is found in the mitochondrion inner membrane. It catalyses the reaction a ubiquinone + NADH + 5 H(+)(in) = a ubiquinol + NAD(+) + 4 H(+)(out). Its function is as follows. Core subunit of the mitochondrial membrane respiratory chain NADH dehydrogenase (Complex I) that is believed to belong to the minimal assembly required for catalysis. Complex I functions in the transfer of electrons from NADH to the respiratory chain. The immediate electron acceptor for the enzyme is believed to be ubiquinone. This chain is NADH dehydrogenase [ubiquinone] iron-sulfur protein 3 (NAD9), found in Oryza sativa subsp. japonica (Rice).